Consider the following 402-residue polypeptide: N-acetyltransferase Eis (402 aa).

In terms of domain architecture, N-acetyltransferase spans 3-154 (VTLCSPTEDD…RFARFHADAP (152 aa)). Residues 85–87 (VAV), 93–98 (RRGLLR), and 121–122 (SE) each bind acetyl-CoA. The active-site Proton donor is the Tyr126. Catalysis depends on Phe402, which acts as the Proton acceptor; via carboxylate.

The protein belongs to the acetyltransferase Eis family. Homohexamer; trimer of dimers.

It localises to the secreted. It is found in the host cytoplasmic vesicle. Its subcellular location is the host phagosome. The protein resides in the extracellular vesicle. The protein localises to the bacterial extracellular vesicle. It localises to the host extracellular space. It carries out the reaction L-lysyl-[protein] + acetyl-CoA = N(6)-acetyl-L-lysyl-[protein] + CoA + H(+). Effector that is released into the host cell and affects host immune responses. Acts as an acetyltransferase that acetylates lysine residues of host proteins. The polypeptide is N-acetyltransferase Eis (Mycobacterium bovis (strain BCG / Pasteur 1173P2)).